The chain runs to 125 residues: Large ribosomal subunit protein bL12 (125 aa).

The protein belongs to the bacterial ribosomal protein bL12 family. As to quaternary structure, homodimer. Part of the ribosomal stalk of the 50S ribosomal subunit. Forms a multimeric L10(L12)X complex, where L10 forms an elongated spine to which 2 to 4 L12 dimers bind in a sequential fashion. Binds GTP-bound translation factors.

Functionally, forms part of the ribosomal stalk which helps the ribosome interact with GTP-bound translation factors. Is thus essential for accurate translation. This Anaeromyxobacter sp. (strain Fw109-5) protein is Large ribosomal subunit protein bL12.